The sequence spans 423 residues: Gamma-glutamyl phosphate reductase (423 aa).

It belongs to the gamma-glutamyl phosphate reductase family.

Its subcellular location is the cytoplasm. It catalyses the reaction L-glutamate 5-semialdehyde + phosphate + NADP(+) = L-glutamyl 5-phosphate + NADPH + H(+). The protein operates within amino-acid biosynthesis; L-proline biosynthesis; L-glutamate 5-semialdehyde from L-glutamate: step 2/2. Functionally, catalyzes the NADPH-dependent reduction of L-glutamate 5-phosphate into L-glutamate 5-semialdehyde and phosphate. The product spontaneously undergoes cyclization to form 1-pyrroline-5-carboxylate. This chain is Gamma-glutamyl phosphate reductase, found in Paraburkholderia xenovorans (strain LB400).